Consider the following 634-residue polypeptide: Knob-associated histidine-rich protein (634 aa).

An N-terminal signal peptide occupies residues Met-1–Cys-34. N-linked (GlcNAc...) asparagine glycosylation is present at Asn-42. The segment covering Ala-57–His-87 has biased composition (basic residues). Disordered stretches follow at residues Ala-57–Arg-143 and Ser-347–Gly-634. Low complexity predominate over residues Pro-95–Gln-104. The span at His-108 to Gln-117 shows a compositional bias: basic residues. 2 stretches are compositionally biased toward basic and acidic residues: residues Lys-354–Lys-375 and Lys-396–Lys-405. Positions Ser-406–His-422 are enriched in basic residues. Composition is skewed to basic and acidic residues over residues Lys-423–His-444 and Lys-453–Asp-493. Residues Ser-494 to Ala-505 are compositionally biased toward polar residues. Residues Ala-509–Lys-520 are compositionally biased toward basic and acidic residues. 4 consecutive repeat copies span residues Thr-540 to Thr-549, Ser-550 to Thr-559, Ser-560 to Thr-569, and Thr-570 to Thr-579. Residues Thr-540–Thr-580 form a 4 X 10 AA tandem repeats of [TS]-[KE]-[GE]-A-T-K-[EG]-A-S-T region. Over residues Ala-567–Ala-591 the composition is skewed to low complexity. Polar residues predominate over residues Ala-605–Leu-620. A compositionally biased stretch (basic residues) spans Lys-625 to Gly-634.

It is found in the secreted. Its function is as follows. KAHRP might mimick human histidine-rich glycoproteins to anchor host thrombospondin or a parasite analog in a binding complex with the endothelial cell receptor. This chain is Knob-associated histidine-rich protein, found in Plasmodium falciparum (isolate FCR-3 / Gambia).